Here is a 72-residue protein sequence, read N- to C-terminus: Conotoxin LiC53 (72 aa).

An N-terminal signal peptide occupies residues 1 to 23 (MEKLTSLLLVAALLMLTQTLIQG). Positions 24–41 (GGEDRPNKKFLQKIKSTA) are excised as a propeptide. 3 disulfide bridges follow: C45/C59, C52/C63, and C58/C68.

The protein belongs to the conotoxin O2 superfamily. Expressed by the venom duct.

It localises to the secreted. This chain is Conotoxin LiC53, found in Conus lividus (Livid cone).